A 123-amino-acid polypeptide reads, in one-letter code: Small ribosomal subunit protein uS12cz/uS12cy (123 aa).

It belongs to the universal ribosomal protein uS12 family. As to quaternary structure, part of the 30S ribosomal subunit.

The protein localises to the plastid. It is found in the chloroplast. With S4 and S5 plays an important role in translational accuracy. Located at the interface of the 30S and 50S subunits. The chain is Small ribosomal subunit protein uS12cz/uS12cy (rps12-A) from Atropa belladonna (Belladonna).